Here is a 186-residue protein sequence, read N- to C-terminus: Translation initiation factor IF-3 (186 aa).

Positions 1-21 (MINRSSGKDRDRSRSGDKELR) are disordered.

Belongs to the IF-3 family. In terms of assembly, monomer.

The protein localises to the cytoplasm. In terms of biological role, IF-3 binds to the 30S ribosomal subunit and shifts the equilibrium between 70S ribosomes and their 50S and 30S subunits in favor of the free subunits, thus enhancing the availability of 30S subunits on which protein synthesis initiation begins. The polypeptide is Translation initiation factor IF-3 (Borrelia turicatae (strain 91E135)).